Here is a 956-residue protein sequence, read N- to C-terminus: Calsyntenin-3 (956 aa).

The signal sequence occupies residues 1 to 19 (MTLLLVSLLLASLLQISSG). Residues 1 to 21 (MTLLLVSLLLASLLQISSGNK) are Cytoplasmic-facing. The Extracellular segment spans residues 20–847 (NKANKHKPWI…SHRNSMVPSA (828 aa)). An intramembrane region (helical) is located at residues 22–42 (ANKHKPWIEAEYQGIVMENDN). 2 Cadherin domains span residues 29-145 (IEAE…APVF) and 146-246 (VERL…KPSW). At 43 to 73 (TVLLNPPLFALDKDAPLRYAGEICGFRLHGS) the chain is on the cytoplasmic side. Positions 74-94 (GVPFEAVILDKATGEGLIRAK) form an intramembrane region, helical. Topologically, residues 95-139 (EPVDCEAQKEHTFTIQAYDCGEGPDGTNTKKSHKATVHVRVNDVN) are cytoplasmic. The helical intramembrane region spans 140 to 160 (EFAPVFVERLYRAAVTEGKLY). The Cytoplasmic portion of the chain corresponds to 161 to 248 (DRILRVEAID…KPTCKPSWQG (88 aa)). The chain crosses the membrane as a helical span at residues 249-269 (WNKRIEYAPGAGSLALFPGIR). Residues 270-357 (LETCDEPLWN…GTQAVQVPLG (88 aa)) lie on the Lumenal side of the membrane. N-linked (GlcNAc...) asparagine glycosylation is found at Asn299, Asn327, Asn347, Asn507, and Asn740. A helical transmembrane segment spans residues 848-868 (ATLIIVVCVGFLVLMVILGLV). The Cytoplasmic segment spans residues 869 to 956 (RIHSLHRRVS…RIIESPPHRY (88 aa)). The disordered stretch occupies residues 916-956 (QTCVAGVAGGQQEEEDSSDSEAADSPSSDERRIIESPPHRY). The segment covering 927 to 937 (QEEEDSSDSEA) has biased composition (acidic residues). Basic and acidic residues predominate over residues 943–956 (SDERRIIESPPHRY).

It belongs to the calsyntenin family. Interacts (via cadherin domains) with both alpha and beta isoforms of neurexins (NRXN1, NRXN2 and NRXN3). Directly interacts with APBA2. Forms a tripartite complex with APBA2 and APP. Interacts with low affinity with KLC1. Interacts with SLC23A2/SVCT2. In terms of assembly, interacts with CIDEA; inhibiting the lipid transferase activity of CIDEA. Interacts with CIDEC; inhibiting the lipid transferase activity of CIDEC. Proteolytically processed under normal cellular conditions. A primary zeta-cleavage generates a large extracellular (soluble) N-terminal domain (sAlc) and a short C-terminal transmembrane fragment (CTF1). A secondary cleavage catalyzed by gamma-secretase within the transmembrane domain releases the beta-Alc-beta chain in the extracellular milieu and produces an intracellular fragment (AlcICD). This processing is strongly suppressed in the tripartite complex formed with APBA2 and APP, which seems to prevent the association with gamma-secretase. In terms of processing, ubiquitinated: endoplasmic reticulum-localized protein is ubiquitinated and degraded by the endoplasmic reticulum-associated degradation (ERAD) pathway. In terms of tissue distribution, restricted to the brain (at protein level). In the cerebral cortex, found in the somas and neuropil of all layers. Expressed at highest levels in neurons of cortical layer 5 and, at lower levels, in neurons of the upper layers. Highly expressed in Purkinje cells. Also found in a few scattered interneurons throughout the granule cell layer and occasionally in neurons in the molecular layer (at protein level). In all layers, high levels in a subpopulation of presumptive GABAergic neurons (based on morphology). As to expression, expression is restricted to adipose tissue, with high expression in thermogenic adipocytes (brown adipose tissue).

It localises to the postsynaptic cell membrane. It is found in the endoplasmic reticulum membrane. The protein resides in the golgi apparatus membrane. The protein localises to the cell projection. Its subcellular location is the dendrite. It localises to the lipid droplet. Functionally, postsynaptic adhesion molecule that binds to presynaptic neurexins to mediate both excitatory and inhibitory synapse formation. Promotes synapse development by acting as a cell adhesion molecule at the postsynaptic membrane, which associates with both neurexin-alpha and neurexin-beta proteins at the presynaptic membrane. Regulates the balance between excitatory and inhibitory synapses by inhibiting formation of excitatory parallel-fiber synapses and promoting formation of inhibitory synapses in the same neuron. May also be involved in ascorbate (vitamin C) uptake via its interaction with SLC23A2/SVCT2. Complex formation with APBA2 and APP, stabilizes APP metabolism and enhances APBA2-mediated suppression of beta-APP40 secretion, due to the retardation of intracellular APP maturation. Adipose-specific isoform that plays a key role in adaptive thermogenesis. Facilitates the efficient use of stored triglyceride by promoting multilocular morphology of thermogenic adipocytes: acts by inhibiting the activity of CIDEA and CIDEC on lipid droplets, thereby preventing lipid droplet fusion and facilitating lipid utilization. May also participate in adaptive thermogenesis by promoting sympathetic innervation of thermogenic adipose tissue: acts by driving secretion of neurotrophic factor S100B from brown adipocytes, stimulating neurite outgrowth from sympathetic neurons. This Mus musculus (Mouse) protein is Calsyntenin-3.